A 265-amino-acid chain; its full sequence is Type III pantothenate kinase (265 aa).

6-13 serves as a coordination point for ATP; that stretch reads DVGNTHTV. 112–115 lines the substrate pocket; that stretch reads GADR. Asp-114 acts as the Proton acceptor in catalysis. Asp-134 lines the K(+) pocket. Residue Thr-137 participates in ATP binding. Residue Thr-189 coordinates substrate.

This sequence belongs to the type III pantothenate kinase family. Homodimer. The cofactor is NH4(+). It depends on K(+) as a cofactor.

Its subcellular location is the cytoplasm. It carries out the reaction (R)-pantothenate + ATP = (R)-4'-phosphopantothenate + ADP + H(+). Its pathway is cofactor biosynthesis; coenzyme A biosynthesis; CoA from (R)-pantothenate: step 1/5. In terms of biological role, catalyzes the phosphorylation of pantothenate (Pan), the first step in CoA biosynthesis. In Streptomyces griseus subsp. griseus (strain JCM 4626 / CBS 651.72 / NBRC 13350 / KCC S-0626 / ISP 5235), this protein is Type III pantothenate kinase.